The following is a 428-amino-acid chain: Trigger factor (428 aa).

The PPIase FKBP-type domain maps to 163–248; the sequence is GDTAVIDFEG…VHEIKEKRLP (86 aa).

This sequence belongs to the FKBP-type PPIase family. Tig subfamily.

The protein localises to the cytoplasm. It catalyses the reaction [protein]-peptidylproline (omega=180) = [protein]-peptidylproline (omega=0). Functionally, involved in protein export. Acts as a chaperone by maintaining the newly synthesized protein in an open conformation. Functions as a peptidyl-prolyl cis-trans isomerase. The protein is Trigger factor of Geobacillus sp. (strain WCH70).